Consider the following 29-residue polypeptide: Lambda-theraphotoxin-Ec2b (29 aa).

3 disulfides stabilise this stretch: Cys2–Cys16, Cys9–Cys21, and Cys15–Cys25.

The protein belongs to the neurotoxin 30 (phrixotoxin) family. As to expression, expressed by the venom gland.

Its subcellular location is the secreted. Its function is as follows. Insect-selective neurotoxin that potently blocks insect calcium-activated potassium (BKCa) channels (Slo-type) in cockroach dorsal unpaired median (DUM) neurons (IC(50)=25.3 nM). This occurs in the absence of any shifts in the voltage dependence of activation. May interact with the turret and/or loop region of the external entrance to the channel and does not project deeply into the pore of the channel. In vivo, does not show toxicity in mice after intracerebroventricular injection of up to 25 pmol/g (1.8 ug/20 g mouse). This chain is Lambda-theraphotoxin-Ec2b, found in Eucratoscelus constrictus (African red-rump baboon spider).